Consider the following 116-residue polypeptide: NADPH-dependent 7-cyano-7-deazaguanine reductase (116 aa).

The active-site Thioimide intermediate is C31. The Proton donor role is filled by D38. Residues 53–55 (IEL) and 72–73 (YE) contribute to the substrate site.

The protein belongs to the GTP cyclohydrolase I family. QueF type 1 subfamily.

The protein localises to the cytoplasm. It carries out the reaction 7-aminomethyl-7-carbaguanine + 2 NADP(+) = 7-cyano-7-deazaguanine + 2 NADPH + 3 H(+). It functions in the pathway tRNA modification; tRNA-queuosine biosynthesis. Functionally, catalyzes the NADPH-dependent reduction of 7-cyano-7-deazaguanine (preQ0) to 7-aminomethyl-7-deazaguanine (preQ1). The chain is NADPH-dependent 7-cyano-7-deazaguanine reductase from Pelodictyon phaeoclathratiforme (strain DSM 5477 / BU-1).